Here is a 289-residue protein sequence, read N- to C-terminus: Serine/threonine-protein phosphatase Pgam5, mitochondrial (289 aa).

It belongs to the phosphoglycerate mutase family. BPG-dependent PGAM subfamily. As to quaternary structure, interacts with Pk92B/ASK1.

It localises to the mitochondrion outer membrane. The catalysed reaction is O-phospho-L-seryl-[protein] + H2O = L-seryl-[protein] + phosphate. It carries out the reaction O-phospho-L-threonyl-[protein] + H2O = L-threonyl-[protein] + phosphate. Its function is as follows. Displays phosphatase activity for serine/threonine residues, and dephosphorylates and activates Pk92B kinase. Has apparently no phosphoglycerate mutase activity. The protein is Serine/threonine-protein phosphatase Pgam5, mitochondrial of Drosophila grimshawi (Hawaiian fruit fly).